Here is a 297-residue protein sequence, read N- to C-terminus: MADQLIRATAAGGGIRAVGVITTDLTAEAQRKHGLSFVATTALGRSMAAGLLLASSMKKEGSRVNLRIRSAGPLGGLMVDAGLDGTVRGYVEHPAIEIEPNTQGLPDVGRAIGPGYLHVMRDVGYGQPYTSTVELVNGEIGDDVAYYLASSEQTPSAILLGVYLDRQGVEAAGGLLIQVLPQAARDPELVSLLESRISHLKGFTQLLRSGKDLPEILEDLLGDLDLTILAEPRSLRFFCPCTHQRMLGALKIFGAPELRDMIAKDQGAEATCEFCSEVYQASIEELEELISDLETAA.

Disulfide bonds link Cys239/Cys241 and Cys272/Cys275.

It belongs to the HSP33 family. Post-translationally, under oxidizing conditions two disulfide bonds are formed involving the reactive cysteines. Under reducing conditions zinc is bound to the reactive cysteines and the protein is inactive.

It localises to the cytoplasm. In terms of biological role, redox regulated molecular chaperone. Protects both thermally unfolding and oxidatively damaged proteins from irreversible aggregation. Plays an important role in the bacterial defense system toward oxidative stress. The protein is 33 kDa chaperonin of Synechococcus elongatus (strain ATCC 33912 / PCC 7942 / FACHB-805) (Anacystis nidulans R2).